Reading from the N-terminus, the 151-residue chain is Large ribosomal subunit protein uL13 (151 aa).

It belongs to the universal ribosomal protein uL13 family. As to quaternary structure, part of the 50S ribosomal subunit.

This protein is one of the early assembly proteins of the 50S ribosomal subunit, although it is not seen to bind rRNA by itself. It is important during the early stages of 50S assembly. The polypeptide is Large ribosomal subunit protein uL13 (Nostoc sp. (strain PCC 7120 / SAG 25.82 / UTEX 2576)).